We begin with the raw amino-acid sequence, 486 residues long: ATP-dependent rRNA helicase RRP3 (486 aa).

Residues 1–11 (MSKVTKQSKSH) are compositionally biased toward basic residues. The segment at 1-52 (MSKVTKQSKSHKSSELVSLAEKIKQKALENRKQSREESQATEEANTASETEA) is disordered. A coiled-coil region spans residues 17–49 (VSLAEKIKQKALENRKQSREESQATEEANTASE). Basic and acidic residues predominate over residues 21–38 (EKIKQKALENRKQSREES). Residues 41-52 (TEEANTASETEA) show a composition bias toward low complexity. Positions 66-94 (SSFRELDLVPELIEACDNLNFTKPTPIQS) match the Q motif motif. The 173-residue stretch at 97 to 269 (IPPALQGKDI…RASLTNPVKC (173 aa)) folds into the Helicase ATP-binding domain. ATP is bound at residue 110-117 (AQTGSGKT). Residues 216–219 (DEAD) carry the DEAD box motif. The region spanning 300 to 446 (LLNEFIGKTT…SIVLSLRDSV (147 aa)) is the Helicase C-terminal domain. The interval 459–486 (RRNKEKQTRGKGRRSRTATRENMDKEEE) is disordered. Over residues 476-486 (ATRENMDKEEE) the composition is skewed to basic and acidic residues.

Belongs to the DEAD box helicase family. DDX47/RRP3 subfamily. In terms of assembly, interacts with the SSU processome.

It is found in the nucleus. The catalysed reaction is ATP + H2O = ADP + phosphate + H(+). Functionally, ATP-dependent rRNA helicase required for pre-ribosomal RNA processing. Involved in the maturation of the 35S-pre-rRNA and to its cleavage to mature 18S rRNA. This chain is ATP-dependent rRNA helicase RRP3, found in Eremothecium gossypii (strain ATCC 10895 / CBS 109.51 / FGSC 9923 / NRRL Y-1056) (Yeast).